A 338-amino-acid chain; its full sequence is Trace amine-associated receptor 9 (338 aa).

Over 1–23 (MELCYENVNGSCIKSSYSPWPRA) the chain is Extracellular. An N-linked (GlcNAc...) asparagine glycan is attached at Asn-9. 2 cysteine pairs are disulfide-bonded: Cys-12/Cys-176 and Cys-95/Cys-180. The helical transmembrane segment at 24-48 (ILYAVLGLGALLAVFGNLLVITAIL) threads the bilayer. The Cytoplasmic portion of the chain corresponds to 49–58 (HFKQLHTPTN). Residues 59–80 (FLVASLACADFLVGVTVMPFST) form a helical membrane-spanning segment. Topologically, residues 81–95 (VRSVEGCWYFGDTYC) are extracellular. A helical transmembrane segment spans residues 96-118 (KFHTCFDTSFCFASLFHLCCISI). The spermidine site is built by Asp-102 and Thr-103. Residues 119–138 (DRYVAVTDPLTYPTKFTISV) are Cytoplasmic-facing. Residues 139-160 (SGVCIALSWFFSVTYSFSIFYT) traverse the membrane as a helical segment. Over 161 to 186 (GANEEGIEELVVALTCVGGCQAPLNQ) the chain is Extracellular. The segment at 164–177 (EEGIEELVVALTCV) is extracellular Loop 2 (ECL2). A helical membrane pass occupies residues 187–208 (NWVLLCFLLFFLPTVVMVFLYG). Residues 209-246 (RIFLVAKQQARKIEGSANQPQASSESYKERVARRERKA) lie on the Cytoplasmic side of the membrane. The helical transmembrane segment at 247–270 (AKTLGIAMAAFLVSWLPYIIDAVI) threads the bilayer. The Extracellular portion of the chain corresponds to 271–283 (DAYMNFITPAYVY). Residues 284–304 (EILVWCVYYNSAMNPLIYAFF) traverse the membrane as a helical segment. Residues 305–338 (YPWFRKAIKLIVSGKVFRADSSRTNLFSEEAGAG) lie on the Cytoplasmic side of the membrane.

Belongs to the G-protein coupled receptor 1 family. Mainly expressed in neurons of the olfactory epithelium. Also expressed in the intestine.

The protein localises to the cell membrane. Olfactory receptor specific for trace amines, such as triethylamine, N-methylpiperidine, N,N-dimethylcyclohexylamine (DMCHA), beta-phenylethylamine (beta-PEA), cadaverine (CAD) and polyamines such as spermidine. Trace amine compounds are enriched in animal body fluids and act on trace amine-associated receptors (TAARs) to elicit both intraspecific and interspecific innate behaviors. Trace amine-binding causes a conformation change that triggers signaling via G(s)-class of G alpha proteins (GNAL or GNAS). In mature olfactory sensory neurons, Taar9 is coupled with GNAL/G(olf)G alpha protein and mediates activation of adenylate cyclase activity to activate cAMP signaling and eventually transmit odorant signals to achieve membrane depolarization. In immature olfactory sensory neurons, Taar9 is coupled with GNAS/G(s) G alpha proteins. The chain is Trace amine-associated receptor 9 from Rattus norvegicus (Rat).